The primary structure comprises 95 residues: Aspartyl/glutamyl-tRNA(Asn/Gln) amidotransferase subunit C (95 aa).

This sequence belongs to the GatC family. Heterotrimer of A, B and C subunits.

The enzyme catalyses L-glutamyl-tRNA(Gln) + L-glutamine + ATP + H2O = L-glutaminyl-tRNA(Gln) + L-glutamate + ADP + phosphate + H(+). It carries out the reaction L-aspartyl-tRNA(Asn) + L-glutamine + ATP + H2O = L-asparaginyl-tRNA(Asn) + L-glutamate + ADP + phosphate + 2 H(+). Its function is as follows. Allows the formation of correctly charged Asn-tRNA(Asn) or Gln-tRNA(Gln) through the transamidation of misacylated Asp-tRNA(Asn) or Glu-tRNA(Gln) in organisms which lack either or both of asparaginyl-tRNA or glutaminyl-tRNA synthetases. The reaction takes place in the presence of glutamine and ATP through an activated phospho-Asp-tRNA(Asn) or phospho-Glu-tRNA(Gln). The chain is Aspartyl/glutamyl-tRNA(Asn/Gln) amidotransferase subunit C from Anaeromyxobacter sp. (strain Fw109-5).